Reading from the N-terminus, the 231-residue chain is Orotidine 5'-phosphate decarboxylase (231 aa).

Residues D11, K33, 60–69 (DLKFHDIPNT), T120, R181, Q190, G210, and R211 contribute to the substrate site. Catalysis depends on K62, which acts as the Proton donor.

It belongs to the OMP decarboxylase family. Type 1 subfamily. As to quaternary structure, homodimer.

The enzyme catalyses orotidine 5'-phosphate + H(+) = UMP + CO2. Its pathway is pyrimidine metabolism; UMP biosynthesis via de novo pathway; UMP from orotate: step 2/2. Catalyzes the decarboxylation of orotidine 5'-monophosphate (OMP) to uridine 5'-monophosphate (UMP). In Vibrio cholerae serotype O1 (strain ATCC 39315 / El Tor Inaba N16961), this protein is Orotidine 5'-phosphate decarboxylase.